Reading from the N-terminus, the 362-residue chain is GTP cyclohydrolase FolE2 (362 aa).

The protein belongs to the GTP cyclohydrolase IV family.

It catalyses the reaction GTP + H2O = 7,8-dihydroneopterin 3'-triphosphate + formate + H(+). Its pathway is cofactor biosynthesis; 7,8-dihydroneopterin triphosphate biosynthesis; 7,8-dihydroneopterin triphosphate from GTP: step 1/1. Functionally, converts GTP to 7,8-dihydroneopterin triphosphate. In Jannaschia sp. (strain CCS1), this protein is GTP cyclohydrolase FolE2.